Reading from the N-terminus, the 266-residue chain is Syntaxin-71 (266 aa).

The Cytoplasmic segment spans residues 1–243; the sequence is MTVIDILTRV…TVNQLRSSRN (243 aa). At Ser-12 the chain carries Phosphoserine. A coiled-coil region spans residues 44–87; that stretch reads ETQIETALEKAELVTKEKNRAAAVAMNAEIRRTKARLSEEVPKL. The disordered stretch occupies residues 122–146; sequence DGTAGGPKSTSAWTPSSTTSRPDIK. A compositionally biased stretch (low complexity) spans 130-141; the sequence is STSAWTPSSTTS. Positions 172 to 234 constitute a t-SNARE coiled-coil homology domain; sequence EMRKIKQEQG…KNTNVRLKDT (63 aa). A helical; Anchor for type IV membrane protein transmembrane segment spans residues 244-264; that stretch reads FCIDIVLLCIVLGIAAYLYNV. Topologically, residues 265-266 are vesicular; it reads LK.

It belongs to the syntaxin family. Part of the t-SNARE complex. In terms of tissue distribution, expressed in root, leaf, stem, flower and silique.

It is found in the membrane. Vesicle trafficking protein that functions in the secretory pathway. The polypeptide is Syntaxin-71 (SYP71) (Arabidopsis thaliana (Mouse-ear cress)).